A 233-amino-acid polypeptide reads, in one-letter code: Small ribosomal subunit protein uS3 (233 aa).

In terms of domain architecture, KH type-2 spans 39 to 107 (VRQYLKKELA…PAQINISEVR (69 aa)).

It belongs to the universal ribosomal protein uS3 family. As to quaternary structure, part of the 30S ribosomal subunit. Forms a tight complex with proteins S10 and S14.

Its function is as follows. Binds the lower part of the 30S subunit head. Binds mRNA in the 70S ribosome, positioning it for translation. The sequence is that of Small ribosomal subunit protein uS3 from Photorhabdus laumondii subsp. laumondii (strain DSM 15139 / CIP 105565 / TT01) (Photorhabdus luminescens subsp. laumondii).